Reading from the N-terminus, the 176-residue chain is Ribosome rescue factor SmrB (176 aa).

The Smr domain occupies Leu98–Glu173.

Belongs to the SmrB family. As to quaternary structure, associates with collided ribosomes, but not with correctly translating polysomes.

In terms of biological role, acts as a ribosome collision sensor. Detects stalled/collided disomes (pairs of ribosomes where the leading ribosome is stalled and a second ribosome has collided with it) and endonucleolytically cleaves mRNA at the 5' boundary of the stalled ribosome. Stalled/collided disomes form a new interface (primarily via the 30S subunits) that binds SmrB. Cleaved mRNA becomes available for tmRNA ligation, leading to ribosomal subunit dissociation and rescue of stalled ribosomes. The protein is Ribosome rescue factor SmrB of Buchnera aphidicola subsp. Schizaphis graminum (strain Sg).